We begin with the raw amino-acid sequence, 60 residues long: Probable tautomerase SAG1079 (60 aa).

Proline 2 functions as the Proton acceptor; via imino nitrogen in the catalytic mechanism.

It belongs to the 4-oxalocrotonate tautomerase family.

This chain is Probable tautomerase SAG1079, found in Streptococcus agalactiae serotype V (strain ATCC BAA-611 / 2603 V/R).